Consider the following 448-residue polypeptide: Ribosomal protein uS12 methylthiotransferase RimO (448 aa).

The MTTase N-terminal domain occupies 7-123 (EKVSLVSLGC…IAEIIAEKEG (117 aa)). The [4Fe-4S] cluster site is built by Cys-16, Cys-52, Cys-86, Cys-161, Cys-165, and Cys-168. A Radical SAM core domain is found at 147 to 377 (SSPYYTAYLK…MRTQARVSFK (231 aa)). The region spanning 380–448 (RSLVDTEELV…DYDLIGEIVP (69 aa)) is the TRAM domain.

This sequence belongs to the methylthiotransferase family. RimO subfamily. [4Fe-4S] cluster is required as a cofactor.

It localises to the cytoplasm. It catalyses the reaction L-aspartate(89)-[ribosomal protein uS12]-hydrogen + (sulfur carrier)-SH + AH2 + 2 S-adenosyl-L-methionine = 3-methylsulfanyl-L-aspartate(89)-[ribosomal protein uS12]-hydrogen + (sulfur carrier)-H + 5'-deoxyadenosine + L-methionine + A + S-adenosyl-L-homocysteine + 2 H(+). Catalyzes the methylthiolation of an aspartic acid residue of ribosomal protein uS12. The chain is Ribosomal protein uS12 methylthiotransferase RimO from Geotalea uraniireducens (strain Rf4) (Geobacter uraniireducens).